The sequence spans 304 residues: Undecaprenyl-diphosphatase (304 aa).

A run of 8 helical transmembrane segments spans residues 5–25 (FLFI…EFVP), 47–67 (GFPE…VVVL), 72–92 (ISSS…LKAS), 111–131 (FGIN…LFHD), 137–157 (LFST…LIVI), 209–231 (ISGL…AMVG), 248–268 (TNLI…LVVI), and 282–302 (IFAI…FTKV).

This sequence belongs to the UppP family.

The protein resides in the cell membrane. The catalysed reaction is di-trans,octa-cis-undecaprenyl diphosphate + H2O = di-trans,octa-cis-undecaprenyl phosphate + phosphate + H(+). Catalyzes the dephosphorylation of undecaprenyl diphosphate (UPP). Confers resistance to bacitracin. The polypeptide is Undecaprenyl-diphosphatase (Clostridium perfringens (strain SM101 / Type A)).